The following is a 614-amino-acid chain: Vitamin B12 transporter BtuB (614 aa).

An N-terminal signal peptide occupies residues 1–20; the sequence is MIKKASLLTACSVTAFSAWA. Over 21–157 the chain is Periplasmic; that stretch reads QDTSPDTLVV…NIITTRDEPG (137 aa). The TonB box motif lies at 26-33; it reads DTLVVTAN. The 115-residue stretch at 38–152 folds into the TBDR plug domain; that stretch reads PRSTVLAPTT…IGGVVNIITT (115 aa). Cyanocob(III)alamin-binding positions include L83, S85, N92, and 110–111; that span reads VS. Residues 155–614 form the TBDR beta-barrel domain; that stretch reads EPGTEISAGW…EYTLSGSYTF (460 aa). Residues 158-165 traverse the membrane as a beta stranded segment; the sequence is TEISAGWG. Residues 166–168 lie on the Extracellular side of the membrane; sequence SNS. The chain crosses the membrane as a beta stranded span at residues 169–178; that stretch reads YQNYDVSTQQ. Residues 179–183 are Periplasmic-facing; it reads QLGDK. The beta stranded transmembrane segment at 184–195 threads the bilayer; it reads TRVTLLGDYAHT. Residues 196–216 lie on the Extracellular side of the membrane; sequence HGYDVVAYGNTGTQAQTDNDG. Ca(2+) contacts are provided by D199, Q211, D213, and D215. Residues 217 to 227 form a beta stranded membrane-spanning segment; that stretch reads FLSKTLYGALE. The Periplasmic segment spans residues 228 to 231; it reads HNFT. Residues 232-248 form a beta stranded membrane-spanning segment; sequence DAWSGFVRGYGYDNRTN. The Ca(2+) site is built by Y249 and D250. Over 249–262 the chain is Extracellular; the sequence is YDAYYSPGSPLLDT. A251 contributes to the cyanocob(III)alamin binding site. Ca(2+) is bound at residue D261. Residues 263–277 form a beta stranded membrane-spanning segment; sequence RKLYSQSWDAGLRYN. A topological domain (periplasmic) is located at residue G278. Residues 279-296 traverse the membrane as a beta stranded segment; that stretch reads ELIKSQLITSYSHSKDYN. Topologically, residues 297–308 are extracellular; that stretch reads YDPHYGRYDSSA. Residue T309 participates in cyanocob(III)alamin binding. A beta stranded membrane pass occupies residues 309–325; it reads TLDEMKQYTVQWANNVI. At 326–327 the chain is on the periplasmic side; sequence VG. Residues 328-337 traverse the membrane as a beta stranded segment; the sequence is HGSIGAGVDW. Over 338–352 the chain is Extracellular; sequence QKQTTTPGTGYVEDG. The chain crosses the membrane as a beta stranded span at residues 353–369; that stretch reads YDQRNTGIYLTGLQQVG. Residue D370 is a topological domain, periplasmic. The beta stranded transmembrane segment at 371–381 threads the bilayer; the sequence is FTFEGAARSDD. At 382 to 384 the chain is on the extracellular side; sequence NSQ. Residues 385-400 form a beta stranded membrane-spanning segment; that stretch reads FGRHGTWQTSAGWEFI. The Periplasmic portion of the chain corresponds to 401-402; that stretch reads EG. A beta stranded transmembrane segment spans residues 403–417; the sequence is YRFIASYGTSYKAPN. The Extracellular segment spans residues 418-433; it reads LGQLYGFYGNPNLDPE. Residues 434-443 traverse the membrane as a beta stranded segment; sequence KSKQWEGAFE. Residues 444–448 are Periplasmic-facing; sequence GLTAG. A beta stranded transmembrane segment spans residues 449 to 458; it reads VNWRISGYRN. Over 459 to 472 the chain is Extracellular; it reads DVSDLIDYDDHTLK. The beta stranded transmembrane segment at 473 to 490 threads the bilayer; the sequence is YYNEGKARIKGVEATANF. The Periplasmic portion of the chain corresponds to 491-493; that stretch reads DTG. Residues 494 to 509 traverse the membrane as a beta stranded segment; the sequence is PLTHTVSYDYVDARNA. Residues 510 to 516 lie on the Extracellular side of the membrane; it reads ITDTPLL. Position 517 (R517) interacts with cyanocob(III)alamin. The chain crosses the membrane as a beta stranded span at residues 517 to 529; sequence RRAKQQVKYQLDW. At 530 to 534 the chain is on the periplasmic side; it reads QLYDF. A beta stranded membrane pass occupies residues 535–550; sequence DWGITYQYLGTRYDKD. Y551 lines the cyanocob(III)alamin pocket. Over 551 to 557 the chain is Extracellular; sequence YSSYPYQ. The beta stranded transmembrane segment at 558-572 threads the bilayer; sequence TVKMGGVSLWDLAVA. Residues 573 to 584 lie on the Periplasmic side of the membrane; that stretch reads YPVTSHLTVRGK. Residues 585 to 596 form a beta stranded membrane-spanning segment; that stretch reads IANLFDKDYETV. Residues 597-601 are Extracellular-facing; sequence YGYQT. The TonB C-terminal box motif lies at 597–614; it reads YGYQTAGREYTLSGSYTF. The chain crosses the membrane as a beta stranded span at residues 602-614; it reads AGREYTLSGSYTF.

Belongs to the TonB-dependent receptor family. BtuB (TC 1.B.14.3.1) subfamily. As to quaternary structure, interacts with TonB. In terms of assembly, (Microbial infection) The hairpin motif of the receptor-binding domain of colicin E3 (ColE3) interacts with BtuB without displacing BtuB's central plug. An N-terminal fragment of E3 binds OmpF; trimeric complexes with ColE3, BtuB and OmpF can be cross-linked and immunoprecipitated.

It localises to the cell outer membrane. Its activity is regulated as follows. Calcium increases vitamin B12 binding affinity by a factor of 50-100. With respect to regulation, (Microbial infection) Colicins E1, E3 and K inhibit cyanocobalamin (CN-B12) uptake; E1 and E3 inhibit binding of CN-B12 to cells while colicin K inhibits a later, energy-dependent step of CN-B12. Functionally, involved in the active translocation of vitamin B12 (cyanocobalamin) across the outer membrane to the periplasmic space. It derives its energy for transport by interacting with the trans-periplasmic membrane protein TonB. In terms of biological role, (Microbial infection) Acts as a receptor for bacteriophages BF23 and C1, and for A and E colicins. Cyanocobalamin (CN-B12) in solid medium protects against colicins E1 and E3. Does not act as the translocon for colicin E3 (ColE3). The translocon is OmpF; trimeric complexes with ColE3, BtuB and OmpF can be cross-linked and immunoprecipitated. The chain is Vitamin B12 transporter BtuB from Escherichia coli (strain K12).